The sequence spans 82 residues: MIGKYLSWFMLAFLFGFVLESYRVQSQDLNPTEKEVLSNMLDFLQRHSRTTYMFPLLSESKRNSELINSLLGAPRVLNNAGR.

Positions 1–26 are cleaved as a signal peptide; the sequence is MIGKYLSWFMLAFLFGFVLESYRVQS. Residue alanine 80 is modified to Alanine amide.

It belongs to the arthropod PDH family. In terms of tissue distribution, expressed strongly in the head and weakly in the ventral nerve cord. Not detected in the midgut cecum or hindgut. In the cephalic neural complex, specifically localized to cells within the optic lobe, anteromedian protocerebrum, accessory lobe, tritocerebrum, and subesophageal ganglion.

It localises to the secreted. In terms of biological role, the pigment-dispersing hormone causes the migration of the distal retinal pigment into the proximal end of the pigment chromatophore cells and thus decreases the amount of light entering the retinulas. May also function as a neurotransmitter and/or neuromodulator. The polypeptide is Pigment-dispersing hormone peptides (Armadillidium vulgare (Pillbug)).